The chain runs to 481 residues: ATP synthase subunit beta, chloroplastic (481 aa).

Residue 161–168 (GGAGVGKT) participates in ATP binding.

Belongs to the ATPase alpha/beta chains family. As to quaternary structure, F-type ATPases have 2 components, CF(1) - the catalytic core - and CF(0) - the membrane proton channel. CF(1) has five subunits: alpha(3), beta(3), gamma(1), delta(1), epsilon(1). CF(0) has four main subunits: a(1), b(1), b'(1) and c(9-12).

The protein localises to the plastid. The protein resides in the chloroplast thylakoid membrane. It carries out the reaction ATP + H2O + 4 H(+)(in) = ADP + phosphate + 5 H(+)(out). In terms of biological role, produces ATP from ADP in the presence of a proton gradient across the membrane. The catalytic sites are hosted primarily by the beta subunits. This chain is ATP synthase subunit beta, chloroplastic, found in Dictyota dichotoma.